Consider the following 139-residue polypeptide: Protein cornichon homolog 4 (139 aa).

The next 3 membrane-spanning stretches (helical) occupy residues 5–25, 57–77, and 118–138; these read VFVF…YFII, IVTV…NLPV, and LGFH…ALIN.

This sequence belongs to the cornichon family. In terms of assembly, interacts with Sec23/24 complex components SEC24B and SEC24D. Interacts with CCR5. Interacts with ADRB2 in the early secretory pathway.

Its subcellular location is the membrane. The protein resides in the endoplasmic reticulum. It localises to the endoplasmic reticulum-Golgi intermediate compartment. Its function is as follows. Involved in G protein-coupled receptors (GPCRs) trafficking from the endoplasmic reticulum to the cell surface; it promotes the exit of GPCRs from the early secretory pathway, likely through interaction with the COPII machinery. In Homo sapiens (Human), this protein is Protein cornichon homolog 4 (CNIH4).